The sequence spans 473 residues: ATP synthase subunit beta, chloroplastic (473 aa).

172 to 179 (GGAGVGKT) serves as a coordination point for ATP.

Belongs to the ATPase alpha/beta chains family. F-type ATPases have 2 components, CF(1) - the catalytic core - and CF(0) - the membrane proton channel. CF(1) has five subunits: alpha(3), beta(3), gamma(1), delta(1), epsilon(1). CF(0) has four main subunits: a(1), b(1), b'(1) and c(9-12).

Its subcellular location is the plastid. It localises to the chloroplast thylakoid membrane. The catalysed reaction is ATP + H2O + 4 H(+)(in) = ADP + phosphate + 5 H(+)(out). Its function is as follows. Produces ATP from ADP in the presence of a proton gradient across the membrane. The catalytic sites are hosted primarily by the beta subunits. The sequence is that of ATP synthase subunit beta, chloroplastic from Pteridium esculentum (Bracken fern).